Here is a 554-residue protein sequence, read N- to C-terminus: GPI alpha-1,2-mannosyltransferase 3 (554 aa).

Asparagine 26 carries an N-linked (GlcNAc...) asparagine glycan. Transmembrane regions (helical) follow at residues 63–83 (LLLF…TSFV), 136–156 (VQLL…VADV), 192–212 (LTNT…PLEG), 224–244 (LVAL…PLLF), 255–275 (DLIL…SLMI), 315–335 (GFPV…YLAP), 340–360 (ILLV…HKEF), 362–382 (FIYP…THLK), and 387–407 (PALS…GLVH). Asparagine 427 is a glycosylation site (N-linked (GlcNAc...) asparagine).

The protein belongs to the glycosyltransferase 22 family. PIGB subfamily.

Its subcellular location is the endoplasmic reticulum membrane. The protein operates within glycolipid biosynthesis; glycosylphosphatidylinositol-anchor biosynthesis. Functionally, alpha-1,2-mannosyltransferase that catalyzes the transfer of the third mannose, via an alpha-1,2 bond, from a dolichol-phosphate-mannose (Dol-P-Man) to an alpha-D-Man-(1-&gt;6)-2-PEtn-alpha-D-Man-(1-&gt;4)-alpha-D-GlcN-(1-&gt;6)-(1-radyl,2-acyl-sn-glycero-3-phospho)-2-acyl-inositol intermediate to generate an alpha-D-Man-(1-&gt;2)-alpha-D-Man-(1-&gt;6)-2-PEtn-alpha-D-Man-(1-&gt;4)-alpha-D-GlcN-(1-&gt;6)-(1-radyl,2-acyl-sn-glycero-3-phospho)-2-acyl-inositol (also termed H6) and participates in the nineth step of the glycosylphosphatidylinositol-anchor biosynthesis. May also add the third mannose to an alpha-D-Man-(1-&gt;6)-alpha-D-Man-(1-&gt;4)-alpha-D-GlcN-(1-&gt;6)-(1-radyl,2-acyl-sn-glycero-3-phospho)-2-acyl-inositol (also termed H3) intermediate generating an alpha-D-Man-(1-&gt;2)-alpha-D-Man-(1-&gt;6)-alpha-D-Man-(1-&gt;4)-alpha-D-GlcN-(1-&gt;6)-(1-radyl,2-acyl-sn-glycero-3-phospho)-2-acyl-inositol (also termed H4). The polypeptide is GPI alpha-1,2-mannosyltransferase 3 (Homo sapiens (Human)).